We begin with the raw amino-acid sequence, 404 residues long: Cysteine desulfurase IscS (404 aa).

Pyridoxal 5'-phosphate is bound by residues 75–76 (AT), Asn155, Gln183, and 203–205 (SAH). Lys206 bears the N6-(pyridoxal phosphate)lysine mark. Thr243 is a pyridoxal 5'-phosphate binding site. The active-site Cysteine persulfide intermediate is the Cys328. Cys328 provides a ligand contact to [2Fe-2S] cluster.

It belongs to the class-V pyridoxal-phosphate-dependent aminotransferase family. NifS/IscS subfamily. In terms of assembly, homodimer. Forms a heterotetramer with IscU, interacts with other sulfur acceptors. Requires pyridoxal 5'-phosphate as cofactor.

The protein localises to the cytoplasm. It catalyses the reaction (sulfur carrier)-H + L-cysteine = (sulfur carrier)-SH + L-alanine. Its pathway is cofactor biosynthesis; iron-sulfur cluster biosynthesis. In terms of biological role, master enzyme that delivers sulfur to a number of partners involved in Fe-S cluster assembly, tRNA modification or cofactor biosynthesis. Catalyzes the removal of elemental sulfur atoms from cysteine to produce alanine. Functions as a sulfur delivery protein for Fe-S cluster synthesis onto IscU, an Fe-S scaffold assembly protein, as well as other S acceptor proteins. This is Cysteine desulfurase IscS from Shewanella loihica (strain ATCC BAA-1088 / PV-4).